We begin with the raw amino-acid sequence, 977 residues long: Alanine--tRNA ligase (977 aa).

The segment at 512-535 (SQVDSKLQSSTPAGTGSYDSKQVS) is disordered. Positions 618, 622, 720, and 724 each coordinate Zn(2+).

Belongs to the class-II aminoacyl-tRNA synthetase family. The cofactor is Zn(2+).

It is found in the cytoplasm. The catalysed reaction is tRNA(Ala) + L-alanine + ATP = L-alanyl-tRNA(Ala) + AMP + diphosphate. Its function is as follows. Catalyzes the attachment of alanine to tRNA(Ala) in a two-step reaction: alanine is first activated by ATP to form Ala-AMP and then transferred to the acceptor end of tRNA(Ala). Also edits incorrectly charged Ser-tRNA(Ala) and Gly-tRNA(Ala) via its editing domain. The polypeptide is Alanine--tRNA ligase (Leptospira interrogans serogroup Icterohaemorrhagiae serovar copenhageni (strain Fiocruz L1-130)).